The primary structure comprises 360 residues: Protein NDRG2 (360 aa).

Residues 325–360 (RTASLSSEGNRSRSRTLSQSSESGGGPPAPLAEVTC) form a disordered region.

Belongs to the NDRG family.

The protein resides in the cytoplasm. Its function is as follows. Contributes to the regulation of the Wnt signaling pathway. Down-regulates CTNNB1-mediated transcriptional activation of target genes. May be involved in neuron differentiation. The chain is Protein NDRG2 from Xenopus tropicalis (Western clawed frog).